A 302-amino-acid chain; its full sequence is ATP synthase mitochondrial F1 complex assembly factor 1 (302 aa).

Belongs to the ATP11 family. In terms of assembly, interacts with ATP5F1B; involved in the assembly of the F1 component of the mitochondrial ATP synthase (ATPase).

It localises to the mitochondrion inner membrane. Functionally, has a complex stabilizing activity in the assembly of the mitochondrial F1-F0 complex. This is ATP synthase mitochondrial F1 complex assembly factor 1 (atpaf1) from Danio rerio (Zebrafish).